The primary structure comprises 597 residues: ATP-dependent lipid A-core flippase (597 aa).

6 helical membrane-spanning segments follow: residues 26-46 (WIFAASIITMAIYAATETGLA), 65-85 (IQIIPLLLIGLFVIRGGANFI), 144-164 (ILTIIRDSLTILGLLAWMAYL), 166-186 (GLLTLIILVTAPLIALIIWWV), 250-270 (AISQPVVQLIAVLGLAGVIHL), and 276-296 (MLAQISVGTFISFITAMMLLL). The region spanning 29–311 (AASIITMAIY…LTKINGTLQR (283 aa)) is the ABC transmembrane type-1 domain. An ABC transporter domain is found at 343-579 (IRFEHLSFCY…ESHYAGLYRL (237 aa)). Residue 377 to 384 (GHSGSGKS) coordinates ATP.

Belongs to the ABC transporter superfamily. Lipid exporter (TC 3.A.1.106) family. As to quaternary structure, homodimer.

The protein localises to the cell inner membrane. It catalyses the reaction ATP + H2O + lipid A-core oligosaccharideSide 1 = ADP + phosphate + lipid A-core oligosaccharideSide 2.. Functionally, involved in lipopolysaccharide (LPS) biosynthesis. Translocates lipid A-core from the inner to the outer leaflet of the inner membrane. Transmembrane domains (TMD) form a pore in the inner membrane and the ATP-binding domain (NBD) is responsible for energy generation. The polypeptide is ATP-dependent lipid A-core flippase (Nitrosococcus oceani (strain ATCC 19707 / BCRC 17464 / JCM 30415 / NCIMB 11848 / C-107)).